The chain runs to 282 residues: MNSSTSTMSEEPDALSVVNQLRDLAADPLNRRAIVQDQGCLPGLILSMDHPNPPVVHSALLALRYLAECRANREKMKGELGMMLSLQNVIQKTTTPGETKLLASEIYDILQSSNMADGDSFNEMNSRRRKAQFFLGTTNKRAKTVVLHIDGLDDTSRRNLCEEALLKIKGVISFTFQMAVQRCVVRIRSDLKAEALASAIASTKVMKAQQVVKSESGEEMLVPFQDTPVEVEQNTELPDYLPEDESPTKEQDKAVSRVGSHPEGGASWLSTAANFLSRSFYW.

An N-acetylmethionine modification is found at Met-1. The stretch at 39–81 (GCLPGLILSMDHPNPPVVHSALLALRYLAECRANREKMKGELG) is one ARM repeat. Thr-137 carries the post-translational modification Phosphothreonine. Ser-189, Ser-246, Ser-260, and Ser-267 each carry phosphoserine. The disordered stretch occupies residues 239-261 (DYLPEDESPTKEQDKAVSRVGSH). A compositionally biased stretch (basic and acidic residues) spans 246–255 (SPTKEQDKAV).

In terms of assembly, interacts with mitochondrial contact site and cristae organizing system (MICOS) complex components IMMT/MIC60 and MICOS10/MIC10. Interacts with mitochondrial outer membrane sorting assembly machinery (SAM) complex components SAMM50 and MTX1.

The protein localises to the cytoplasm. It localises to the mitochondrion. It is found in the mitochondrion outer membrane. Functionally, in association with mitochondrial contact site and cristae organizing system (MICOS) complex components and mitochondrial outer membrane sorting assembly machinery (SAM) complex components may regulate mitochondrial dynamics playing a role in determining mitochondrial length, distribution and motility. The polypeptide is Armadillo repeat-containing protein 1 (ARMC1) (Pongo abelii (Sumatran orangutan)).